The chain runs to 225 residues: Ribose-5-phosphate isomerase A (225 aa).

The interval Met-1–Asp-20 is disordered. Residues Thr-32–Thr-35, Asp-86–Asp-89, and Lys-98–Gly-101 each bind substrate. The active-site Proton acceptor is the Glu-107. Position 125 (Lys-125) interacts with substrate.

It belongs to the ribose 5-phosphate isomerase family. Homodimer.

The enzyme catalyses aldehydo-D-ribose 5-phosphate = D-ribulose 5-phosphate. It functions in the pathway carbohydrate degradation; pentose phosphate pathway; D-ribose 5-phosphate from D-ribulose 5-phosphate (non-oxidative stage): step 1/1. Its function is as follows. Catalyzes the reversible conversion of ribose-5-phosphate to ribulose 5-phosphate. This Natronomonas pharaonis (strain ATCC 35678 / DSM 2160 / CIP 103997 / JCM 8858 / NBRC 14720 / NCIMB 2260 / Gabara) (Halobacterium pharaonis) protein is Ribose-5-phosphate isomerase A.